The chain runs to 192 residues: Thymidine kinase (192 aa).

ATP is bound by residues 9–16 (ASMNAGKS) and 87–90 (DEAQ). Residue Glu-88 is the Proton acceptor of the active site. 4 residues coordinate Zn(2+): Cys-145, Cys-147, Cys-182, and His-185.

Belongs to the thymidine kinase family. Homotetramer.

It localises to the cytoplasm. It carries out the reaction thymidine + ATP = dTMP + ADP + H(+). The sequence is that of Thymidine kinase from Novosphingobium aromaticivorans (strain ATCC 700278 / DSM 12444 / CCUG 56034 / CIP 105152 / NBRC 16084 / F199).